The sequence spans 183 residues: MLQRFFATALAIFVVLLGGCSATSGLQAYVDSYDGYEFLYPRGWVQVQVEDPVDVVFHDIIETTENVSVVVNTVASTKSLEELGSPEEVGDRLLRNIIAPSESGRSSALIAATSQKADDKTYYILEYAVTLPGDGNTAQQRHNLSSIAVSRGKVYTLSVSAPEERWPKVEDQFKTIVSSFTVY.

Residues 1–19 form the signal peptide; sequence MLQRFFATALAIFVVLLGG. The N-palmitoyl cysteine moiety is linked to residue Cys20. A lipid anchor (S-diacylglycerol cysteine) is attached at Cys20. Zn(2+) contacts are provided by Asp31, Asp34, Asp54, His58, Thr63, Glu87, Asp91, His142, Glu163, and Glu164.

This sequence belongs to the PsbP family. CyanoP subfamily. In terms of assembly, monomer. Present in very small amounts in PSII. The cofactor is Zn(2+).

It localises to the cellular thylakoid membrane. Its function is as follows. Plays a role in the early stages of photosystem II (PSII) assembly; binds to D2 (psbD) and may facilitate its incorporation into PSII. Present in less than 1% of PSII preparations. The protein is CyanoP of Thermosynechococcus vestitus (strain NIES-2133 / IAM M-273 / BP-1).